The following is a 311-amino-acid chain: Tryptophan 2,3-dioxygenase (311 aa).

Positions 1 to 37 (MQPPGGDAPAGCPFSGARAAQPAQAAHEAPHVPGEAD) are disordered. Low complexity predominate over residues 17-27 (ARAAQPAQAAH). Residues 80 to 84 (FIIQH), Tyr142, and Arg146 contribute to the substrate site. His269 lines the heme pocket. Position 283 (Thr283) interacts with substrate.

This sequence belongs to the tryptophan 2,3-dioxygenase family. In terms of assembly, homotetramer. The cofactor is heme.

The catalysed reaction is L-tryptophan + O2 = N-formyl-L-kynurenine. It participates in amino-acid degradation; L-tryptophan degradation via kynurenine pathway; L-kynurenine from L-tryptophan: step 1/2. Heme-dependent dioxygenase that catalyzes the oxidative cleavage of the L-tryptophan (L-Trp) pyrrole ring and converts L-tryptophan to N-formyl-L-kynurenine. Catalyzes the oxidative cleavage of the indole moiety. The chain is Tryptophan 2,3-dioxygenase from Burkholderia orbicola (strain MC0-3).